The following is a 182-amino-acid chain: Peptidoglycan L,D-endopeptidase MepK (182 aa).

The segment at residues methionine 1 to alanine 30 is a signal peptide (tat-type signal). Positions 133, 140, and 173 each coordinate Zn(2+).

The protein belongs to the peptidase M15 family. Zn(2+) is required as a cofactor. Predicted to be exported by the Tat system. The position of the signal peptide cleavage has not been experimentally proven.

Its pathway is cell wall biogenesis; cell wall polysaccharide biosynthesis. Functionally, l,D-endopeptidase that cleaves meso-diaminopimelic acid (mDAP)-mDAP cross-links in peptidoglycan. It works in conjunction with other elongation-specific D,D-endopeptidases to make space for efficient incorporation of nascent peptidoglycan strands into the sacculus and thus enable cell wall expansion. This chain is Peptidoglycan L,D-endopeptidase MepK, found in Escherichia coli O157:H7.